The primary structure comprises 852 residues: Beta-galactosidase 8 (852 aa).

The first 29 residues, 1-29 (MEIAAKMVKVRKMEMILLLILVIVVAATA), serve as a signal peptide directing secretion. N-linked (GlcNAc...) asparagine glycosylation occurs at Asn31. Residue Glu188 is the Proton donor of the active site. The Nucleophile role is filled by Glu257. N-linked (GlcNAc...) asparagine glycosylation is found at Asn258, Asn475, Asn766, and Asn807. Residues 766–852 (NRTRPVLSLK…KSLAVEASCS (87 aa)) enclose the SUEL-type lectin domain.

It belongs to the glycosyl hydrolase 35 family. As to expression, expressed in roots, flowers and siliques.

It is found in the secreted. The protein localises to the extracellular space. The protein resides in the apoplast. The enzyme catalyses Hydrolysis of terminal non-reducing beta-D-galactose residues in beta-D-galactosides.. The polypeptide is Beta-galactosidase 8 (BGAL8) (Arabidopsis thaliana (Mouse-ear cress)).